The chain runs to 109 residues: T cell receptor alpha variable 26-1 (109 aa).

A signal peptide spans 1–19; sequence MRLVARVTVFLTFGTIIDA. The Ig-like domain maps to 20–109; sequence KTTQPTSMDC…TAVYYCIVRV (90 aa). A disulfide bridge links C39 with C105. N-linked (GlcNAc...) asparagine glycans are attached at residues N40 and N71.

As to quaternary structure, alpha-beta TR is a heterodimer composed of an alpha and beta chain; disulfide-linked. The alpha-beta TR is associated with the transmembrane signaling CD3 coreceptor proteins to form the TR-CD3 (TcR or TCR). The assembly of alpha-beta TR heterodimers with CD3 occurs in the endoplasmic reticulum where a single alpha-beta TR heterodimer associates with one CD3D-CD3E heterodimer, one CD3G-CD3E heterodimer and one CD247 homodimer forming a stable octameric structure. CD3D-CD3E and CD3G-CD3E heterodimers preferentially associate with TR alpha and TR beta chains, respectively. The association of the CD247 homodimer is the last step of TcR assembly in the endoplasmic reticulum and is required for transport to the cell surface.

The protein localises to the cell membrane. In terms of biological role, v region of the variable domain of T cell receptor (TR) alpha chain that participates in the antigen recognition. Alpha-beta T cell receptors are antigen specific receptors which are essential to the immune response and are present on the cell surface of T lymphocytes. Recognize peptide-major histocompatibility (MH) (pMH) complexes that are displayed by antigen presenting cells (APC), a prerequisite for efficient T cell adaptive immunity against pathogens. Binding of alpha-beta TR to pMH complex initiates TR-CD3 clustering on the cell surface and intracellular activation of LCK that phosphorylates the ITAM motifs of CD3G, CD3D, CD3E and CD247 enabling the recruitment of ZAP70. In turn ZAP70 phosphorylates LAT, which recruits numerous signaling molecules to form the LAT signalosome. The LAT signalosome propagates signal branching to three major signaling pathways, the calcium, the mitogen-activated protein kinase (MAPK) kinase and the nuclear factor NF-kappa-B (NF-kB) pathways, leading to the mobilization of transcription factors that are critical for gene expression and essential for T cell growth and differentiation. The T cell repertoire is generated in the thymus, by V-(D)-J rearrangement. This repertoire is then shaped by intrathymic selection events to generate a peripheral T cell pool of self-MH restricted, non-autoaggressive T cells. Post-thymic interaction of alpha-beta TR with the pMH complexes shapes TR structural and functional avidity. This chain is T cell receptor alpha variable 26-1, found in Homo sapiens (Human).